The primary structure comprises 260 residues: Ribonuclease HII (260 aa).

The 188-residue stretch at 73 to 260 folds into the RNase H type-2 domain; sequence LHIAGIDEAG…APVQQQLDIV (188 aa). Positions 79, 80, and 171 each coordinate a divalent metal cation.

It belongs to the RNase HII family. It depends on Mn(2+) as a cofactor. Mg(2+) is required as a cofactor.

It is found in the cytoplasm. The enzyme catalyses Endonucleolytic cleavage to 5'-phosphomonoester.. Its function is as follows. Endonuclease that specifically degrades the RNA of RNA-DNA hybrids. This is Ribonuclease HII from Desulfitobacterium hafniense (strain DSM 10664 / DCB-2).